The primary structure comprises 271 residues: NH(3)-dependent NAD(+) synthetase (271 aa).

Residue 43–50 (GISGGQDS) coordinates ATP. Residue Asp49 coordinates Mg(2+). A deamido-NAD(+)-binding site is contributed by Arg137. Thr157 is an ATP binding site. Glu162 serves as a coordination point for Mg(2+). Deamido-NAD(+)-binding residues include Lys170 and Asp177. Positions 186 and 208 each coordinate ATP. A deamido-NAD(+)-binding site is contributed by 257 to 258 (HK).

The protein belongs to the NAD synthetase family. In terms of assembly, homodimer.

The enzyme catalyses deamido-NAD(+) + NH4(+) + ATP = AMP + diphosphate + NAD(+) + H(+). The protein operates within cofactor biosynthesis; NAD(+) biosynthesis; NAD(+) from deamido-NAD(+) (ammonia route): step 1/1. Its function is as follows. Catalyzes the ATP-dependent amidation of deamido-NAD to form NAD. Uses ammonia as a nitrogen source. This Exiguobacterium sibiricum (strain DSM 17290 / CCUG 55495 / CIP 109462 / JCM 13490 / 255-15) protein is NH(3)-dependent NAD(+) synthetase.